We begin with the raw amino-acid sequence, 1007 residues long: Rho-type GTPase-activating protein 1 (1007 aa).

LIM zinc-binding domains lie at Cys-13 to Cys-66 and Cys-70 to Cys-122. 3 disordered regions span residues Ile-203–Ser-293, Glu-401–Leu-478, and Lys-505–Ser-600. Residues Asn-212 to Asn-221 show a composition bias toward low complexity. 2 stretches are compositionally biased toward polar residues: residues Ala-250 to Thr-261 and His-270 to Ser-293. Thr-278 bears the Phosphothreonine mark. Ser-291 bears the Phosphoserine mark. The span at Lys-411–Arg-421 shows a compositional bias: basic residues. Positions Arg-454–Thr-466 are enriched in basic and acidic residues. Polar residues-rich tracts occupy residues Gly-467–Leu-478 and Ser-529–Ser-579. The residue at position 532 (Thr-532) is a Phosphothreonine. Positions Glu-583–Ser-600 are enriched in basic and acidic residues. Positions Ser-791 to Leu-1006 constitute a Rho-GAP domain.

Functionally, GTPase-activating protein (GAP) for CDC42 and/or RHO1. Negative regulator of the pheromone-response pathway through the STE20 protein kinase; acts at a step between the G-protein and the MAP kinase module. Dominant suppressor of bud emergence defect caused by deletion of IPL2/BEM2. Involved in the control of polarized cell growth and proper bud site selection. This chain is Rho-type GTPase-activating protein 1 (RGA1), found in Saccharomyces cerevisiae (strain ATCC 204508 / S288c) (Baker's yeast).